A 297-amino-acid chain; its full sequence is 33 kDa chaperonin (297 aa).

2 cysteine pairs are disulfide-bonded: Cys234/Cys236 and Cys267/Cys270.

Belongs to the HSP33 family. In terms of processing, under oxidizing conditions two disulfide bonds are formed involving the reactive cysteines. Under reducing conditions zinc is bound to the reactive cysteines and the protein is inactive.

Its subcellular location is the cytoplasm. In terms of biological role, redox regulated molecular chaperone. Protects both thermally unfolding and oxidatively damaged proteins from irreversible aggregation. Plays an important role in the bacterial defense system toward oxidative stress. The sequence is that of 33 kDa chaperonin from Pseudoalteromonas atlantica (strain T6c / ATCC BAA-1087).